Consider the following 31-residue polypeptide: Superoxide dismutase [Cu-Zn] (31 aa).

It belongs to the Cu-Zn superoxide dismutase family. It depends on Cu cation as a cofactor. Zn(2+) serves as cofactor.

The protein localises to the cytoplasm. The enzyme catalyses 2 superoxide + 2 H(+) = H2O2 + O2. Destroys radicals which are normally produced within the cells and which are toxic to biological systems. The chain is Superoxide dismutase [Cu-Zn] from Striga hermonthica (Purple witchweed).